We begin with the raw amino-acid sequence, 350 residues long: Flap endonuclease 1 (350 aa).

Residues 1 to 101 form an N-domain region; that stretch reads MGVNIREVIP…LEIERRKRVK (101 aa). Mg(2+)-binding residues include Asp30, Asp83, Glu155, Glu157, Asp176, Asp178, and Asp239. The interval 119–261 is I-domain; that stretch reads AARRYAQMAA…TALKMVKAHR (143 aa). An interaction with PCNA region spans residues 340 to 348; it reads QQMGLDAWL.

The protein belongs to the XPG/RAD2 endonuclease family. FEN1 subfamily. In terms of assembly, interacts with PCNA. PCNA stimulates the nuclease activity without altering cleavage specificity. Mg(2+) is required as a cofactor.

Functionally, structure-specific nuclease with 5'-flap endonuclease and 5'-3' exonuclease activities involved in DNA replication and repair. During DNA replication, cleaves the 5'-overhanging flap structure that is generated by displacement synthesis when DNA polymerase encounters the 5'-end of a downstream Okazaki fragment. Binds the unpaired 3'-DNA end and kinks the DNA to facilitate 5' cleavage specificity. Cleaves one nucleotide into the double-stranded DNA from the junction in flap DNA, leaving a nick for ligation. Also involved in the base excision repair (BER) pathway. Acts as a genome stabilization factor that prevents flaps from equilibrating into structures that lead to duplications and deletions. Also possesses 5'-3' exonuclease activity on nicked or gapped double-stranded DNA. The polypeptide is Flap endonuclease 1 (Hyperthermus butylicus (strain DSM 5456 / JCM 9403 / PLM1-5)).